The following is a 178-amino-acid chain: Large ribosomal subunit protein uL6 (178 aa).

The protein belongs to the universal ribosomal protein uL6 family. Part of the 50S ribosomal subunit.

In terms of biological role, this protein binds to the 23S rRNA, and is important in its secondary structure. It is located near the subunit interface in the base of the L7/L12 stalk, and near the tRNA binding site of the peptidyltransferase center. In Levilactobacillus brevis (strain ATCC 367 / BCRC 12310 / CIP 105137 / JCM 1170 / LMG 11437 / NCIMB 947 / NCTC 947) (Lactobacillus brevis), this protein is Large ribosomal subunit protein uL6.